A 214-amino-acid polypeptide reads, in one-letter code: Transmembrane emp24 domain-containing protein p24delta10 (214 aa).

Residues Met1–Ser24 form the signal peptide. The Lumenal segment spans residues Leu25–Lys181. Positions Thr34–Ser149 constitute a GOLD domain. Residues Leu164–Ser177 are a coiled coil. Position 167 is an omega-N-methylated arginine (Arg167). Asn175 carries an N-linked (GlcNAc...) asparagine glycan. Residues Met182 to Leu202 form a helical membrane-spanning segment. Residues His203 to Ile214 lie on the Cytoplasmic side of the membrane. A COPII vesicle coat-binding motif is present at residues Phe207–Phe208. The short motif at Phe207 to Ile214 is the COPI vesicle coat-binding element.

It belongs to the EMP24/GP25L family. As to quaternary structure, probably oligomerizes with other members of the EMP24/GP25L family. Associates with the COPI vesicle coat (coatomer). Associates with the COPII vesicle coat (coatomer).

The protein localises to the endoplasmic reticulum membrane. It is found in the golgi apparatus. Its subcellular location is the cis-Golgi network membrane. It localises to the golgi stack membrane. Its function is as follows. Involved in vesicular protein trafficking. Mainly functions in the early secretory pathway. Thought to act as cargo receptor at the lumenal side for incorporation of secretory cargo molecules into transport vesicles and to be involved in vesicle coat formation at the cytoplasmic side. In Arabidopsis thaliana (Mouse-ear cress), this protein is Transmembrane emp24 domain-containing protein p24delta10.